The primary structure comprises 282 residues: Osteoclast-associated immunoglobulin-like receptor (282 aa).

A signal peptide spans 1 to 18; the sequence is MALVLILQLLTLWPLCHT. 2 Ig-like domains span residues 22–116 and 126–219; these read PSVP…SQPS and ELPR…SWEG. The N-linked (GlcNAc...) asparagine glycan is linked to Asn48. A disulfide bridge links Cys53 with Cys100. Asn145 carries N-linked (GlcNAc...) asparagine glycosylation. Positions 221–282 are disordered; the sequence is GPEARPASSA…PAPPPSDPGV (62 aa). Positions 273-282 are enriched in pro residues; that stretch reads PAPPPSDPGV.

The protein belongs to the leukocyte receptor complex/polymeric immunoglobulin receptor (PIR/LRC) family.

Its subcellular location is the secreted. The protein localises to the cell membrane. Functionally, regulator of osteoclastogenesis which plays an important bone-specific function in osteoclast differentiation. The chain is Osteoclast-associated immunoglobulin-like receptor (OSCAR) from Homo sapiens (Human).